A 477-amino-acid polypeptide reads, in one-letter code: Phosphomethylpyrimidine synthase (477 aa).

Substrate is bound by residues asparagine 67, methionine 96, tyrosine 125, histidine 160, 180–182 (SRG), 221–224 (DGLR), and glutamate 260. Histidine 264 provides a ligand contact to Zn(2+). Residue tyrosine 287 coordinates substrate. Position 328 (histidine 328) interacts with Zn(2+). [4Fe-4S] cluster contacts are provided by cysteine 408, cysteine 411, and cysteine 416. A compositionally biased stretch (basic and acidic residues) spans 427–440 (AGDGMDGLESRTDL). A disordered region spans residues 427–477 (AGDGMDGLESRTDLDSSAAAAVNRPPTGVHRAEKLDDIPCPVAEDDVAADD).

Belongs to the ThiC family. It depends on [4Fe-4S] cluster as a cofactor.

It carries out the reaction 5-amino-1-(5-phospho-beta-D-ribosyl)imidazole + S-adenosyl-L-methionine = 4-amino-2-methyl-5-(phosphooxymethyl)pyrimidine + CO + 5'-deoxyadenosine + formate + L-methionine + 3 H(+). Its pathway is cofactor biosynthesis; thiamine diphosphate biosynthesis. In terms of biological role, catalyzes the synthesis of the hydroxymethylpyrimidine phosphate (HMP-P) moiety of thiamine from aminoimidazole ribotide (AIR) in a radical S-adenosyl-L-methionine (SAM)-dependent reaction. The chain is Phosphomethylpyrimidine synthase from Natronomonas pharaonis (strain ATCC 35678 / DSM 2160 / CIP 103997 / JCM 8858 / NBRC 14720 / NCIMB 2260 / Gabara) (Halobacterium pharaonis).